A 252-amino-acid chain; its full sequence is Expansin-A12 (252 aa).

A signal peptide spans 1–23; sequence MDMKGTYLVTVILLVSTLSVGMC. Positions 45-156 constitute an Expansin-like EG45 domain; that stretch reads GGACGYDNPY…RRVGCKRRGG (112 aa). In terms of domain architecture, Expansin-like CBD spans 166–246; the sequence is NFNMVMISNV…SWWFGQTFSS (81 aa).

The protein belongs to the expansin family. Expansin A subfamily.

It localises to the secreted. The protein resides in the cell wall. It is found in the membrane. Causes loosening and extension of plant cell walls by disrupting non-covalent bonding between cellulose microfibrils and matrix glucans. No enzymatic activity has been found. The polypeptide is Expansin-A12 (EXPA12) (Arabidopsis thaliana (Mouse-ear cress)).